The sequence spans 521 residues: Bifunctional purine biosynthesis protein PurH (521 aa).

Residues 1 to 149 form the MGS-like domain; sequence MSDPVIKRAL…KNNESVTVVT (149 aa).

The protein belongs to the PurH family.

The enzyme catalyses (6R)-10-formyltetrahydrofolate + 5-amino-1-(5-phospho-beta-D-ribosyl)imidazole-4-carboxamide = 5-formamido-1-(5-phospho-D-ribosyl)imidazole-4-carboxamide + (6S)-5,6,7,8-tetrahydrofolate. The catalysed reaction is IMP + H2O = 5-formamido-1-(5-phospho-D-ribosyl)imidazole-4-carboxamide. The protein operates within purine metabolism; IMP biosynthesis via de novo pathway; 5-formamido-1-(5-phospho-D-ribosyl)imidazole-4-carboxamide from 5-amino-1-(5-phospho-D-ribosyl)imidazole-4-carboxamide (10-formyl THF route): step 1/1. It participates in purine metabolism; IMP biosynthesis via de novo pathway; IMP from 5-formamido-1-(5-phospho-D-ribosyl)imidazole-4-carboxamide: step 1/1. The protein is Bifunctional purine biosynthesis protein PurH of Chlorobium phaeobacteroides (strain DSM 266 / SMG 266 / 2430).